Consider the following 360-residue polypeptide: Protein phosphatase 1L (360 aa).

Over 1–25 the chain is Extracellular; the sequence is MIEDTMTLLSLLGRIMRYFLLRPET. The helical transmembrane segment at 26-42 threads the bilayer; sequence LFLLCISLALWSYFFHT. Topologically, residues 43–360 are cytoplasmic; it reads DEVKTIVKSS…FRNSSKTEEQ (318 aa). Residues 92–351 form the PPM-type phosphatase domain; sequence NVAVYSIQGR…DNITVMVVKF (260 aa). Mn(2+) contacts are provided by Asp-128, Gly-129, Asp-302, and Asp-342.

The protein belongs to the PP2C family. As to quaternary structure, interacts with MAP3K7/TAK1 and MAP3K5. Mg(2+) is required as a cofactor. Mn(2+) serves as cofactor.

Its subcellular location is the membrane. The catalysed reaction is O-phospho-L-seryl-[protein] + H2O = L-seryl-[protein] + phosphate. It catalyses the reaction O-phospho-L-threonyl-[protein] + H2O = L-threonyl-[protein] + phosphate. Acts as a suppressor of the SAPK signaling pathways by associating with and dephosphorylating MAP3K7/TAK1 and MAP3K5, and by attenuating the association between MAP3K7/TAK1 and MAP2K4 or MAP2K6. The protein is Protein phosphatase 1L (PPM1L) of Bos taurus (Bovine).